Reading from the N-terminus, the 483-residue chain is Glycogen synthase (483 aa).

Lys-15 is an ADP-alpha-D-glucose binding site.

It belongs to the glycosyltransferase 1 family. Bacterial/plant glycogen synthase subfamily.

The catalysed reaction is [(1-&gt;4)-alpha-D-glucosyl](n) + ADP-alpha-D-glucose = [(1-&gt;4)-alpha-D-glucosyl](n+1) + ADP + H(+). Its pathway is glycan biosynthesis; glycogen biosynthesis. Functionally, synthesizes alpha-1,4-glucan chains using ADP-glucose. This Alkalilimnicola ehrlichii (strain ATCC BAA-1101 / DSM 17681 / MLHE-1) protein is Glycogen synthase.